Consider the following 64-residue polypeptide: Large ribosomal subunit protein bL33 (64 aa).

It belongs to the bacterial ribosomal protein bL33 family.

In Synechococcus sp. (strain WH7803), this protein is Large ribosomal subunit protein bL33.